Reading from the N-terminus, the 366-residue chain is 3-dehydroquinate synthase (366 aa).

NAD(+)-binding positions include 71–76 (DGEQYK), 105–109 (GVIGD), 129–130 (TT), K142, K151, and 169–172 (CLQT). Zn(2+)-binding residues include E184, H248, and H265.

The protein belongs to the sugar phosphate cyclases superfamily. Dehydroquinate synthase family. NAD(+) serves as cofactor. It depends on Co(2+) as a cofactor. The cofactor is Zn(2+).

It is found in the cytoplasm. It catalyses the reaction 7-phospho-2-dehydro-3-deoxy-D-arabino-heptonate = 3-dehydroquinate + phosphate. Its pathway is metabolic intermediate biosynthesis; chorismate biosynthesis; chorismate from D-erythrose 4-phosphate and phosphoenolpyruvate: step 2/7. Functionally, catalyzes the conversion of 3-deoxy-D-arabino-heptulosonate 7-phosphate (DAHP) to dehydroquinate (DHQ). The sequence is that of 3-dehydroquinate synthase from Photorhabdus laumondii subsp. laumondii (strain DSM 15139 / CIP 105565 / TT01) (Photorhabdus luminescens subsp. laumondii).